A 247-amino-acid chain; its full sequence is NCT transcriptional regulatory complex subunit A (247 aa).

Residues 1–12 (MTDQDSTYRPRS) show a composition bias toward basic and acidic residues. 3 disordered regions span residues 1-31 (MTDQ…SPIY), 48-82 (FFAP…SPDM), and 212-247 (VPDQ…DDSD). The segment covering 13-22 (PDLSTFQSSI) has biased composition (polar residues).

Belongs to the NC2 alpha/DRAP1 family. As to quaternary structure, forms the NCT transcriptional regulatory complex with nctB and mot1.

The protein localises to the nucleus. Functionally, part of the NCT transcriptional regulatory complex that acts as a key regulator of ergosterol biosynthesis and the azole exporter cdr1B. The NCT complex binds the promoters of genes linked to azole susceptibility, and especially represses the expression of cdr1B transporter. In Aspergillus fumigatus (strain CBS 144.89 / FGSC A1163 / CEA10) (Neosartorya fumigata), this protein is NCT transcriptional regulatory complex subunit A.